Here is a 68-residue protein sequence, read N- to C-terminus: Large ribosomal subunit protein bL35 (68 aa).

Belongs to the bacterial ribosomal protein bL35 family.

This Fusobacterium nucleatum subsp. nucleatum (strain ATCC 25586 / DSM 15643 / BCRC 10681 / CIP 101130 / JCM 8532 / KCTC 2640 / LMG 13131 / VPI 4355) protein is Large ribosomal subunit protein bL35.